The primary structure comprises 264 residues: Thymidylate synthase (264 aa).

R21 lines the dUMP pocket. H51 contacts (6R)-5,10-methylene-5,6,7,8-tetrahydrofolate. Position 126–127 (126–127) interacts with dUMP; the sequence is RR. C146 (nucleophile) is an active-site residue. DUMP contacts are provided by residues 166–169, N177, and 207–209; these read RSAD and HLY. D169 contacts (6R)-5,10-methylene-5,6,7,8-tetrahydrofolate. A (6R)-5,10-methylene-5,6,7,8-tetrahydrofolate-binding site is contributed by S263.

This sequence belongs to the thymidylate synthase family. Bacterial-type ThyA subfamily. In terms of assembly, homodimer.

The protein resides in the cytoplasm. It catalyses the reaction dUMP + (6R)-5,10-methylene-5,6,7,8-tetrahydrofolate = 7,8-dihydrofolate + dTMP. It participates in pyrimidine metabolism; dTTP biosynthesis. Catalyzes the reductive methylation of 2'-deoxyuridine-5'-monophosphate (dUMP) to 2'-deoxythymidine-5'-monophosphate (dTMP) while utilizing 5,10-methylenetetrahydrofolate (mTHF) as the methyl donor and reductant in the reaction, yielding dihydrofolate (DHF) as a by-product. This enzymatic reaction provides an intracellular de novo source of dTMP, an essential precursor for DNA biosynthesis. This is Thymidylate synthase from Laribacter hongkongensis (strain HLHK9).